Reading from the N-terminus, the 312-residue chain is Transcription initiation factor IIB 1 (312 aa).

Residues 12 to 43 (EIERCPECGSTNLIRDYEHGELVCGECGAVIE) form a TFIIB-type zinc finger. Residues cysteine 16, cysteine 19, cysteine 35, and cysteine 38 each contribute to the Zn(2+) site. 2 repeat units span residues 129-212 (QELE…SRYL) and 223-304 (DYIS…ELTE).

It belongs to the TFIIB family.

Functionally, stabilizes TBP binding to an archaeal box-A promoter. Also responsible for recruiting RNA polymerase II to the pre-initiation complex (DNA-TBP-TFIIB). The sequence is that of Transcription initiation factor IIB 1 from Thermoplasma volcanium (strain ATCC 51530 / DSM 4299 / JCM 9571 / NBRC 15438 / GSS1).